A 196-amino-acid polypeptide reads, in one-letter code: Regulator of G-protein signaling 1 (196 aa).

The interval 1 to 27 is disordered; the sequence is MPGMFFSANPKDLKGTDQSLLDDKTQK. A compositionally biased stretch (basic and acidic residues) spans 11–25; it reads KDLKGTDQSLLDDKT. In terms of domain architecture, RGS spans 72 to 187; it reads SLEKLLANQT…LKSNIYLNLL (116 aa).

In terms of assembly, interacts with GNAI1 and GNAQ.

It localises to the cell membrane. Its subcellular location is the cytoplasm. The protein resides in the cytosol. Functionally, regulates G protein-coupled receptor signaling cascades, including signaling downstream of the N-formylpeptide chemoattractant receptors and leukotriene receptors. Inhibits B cell chemotaxis toward CXCL12. Inhibits signal transduction by increasing the GTPase activity of G protein alpha subunits, thereby driving them into their inactive GDP-bound form. The polypeptide is Regulator of G-protein signaling 1 (RGS1) (Equus caballus (Horse)).